Consider the following 298-residue polypeptide: Urease accessory protein UreD (298 aa).

This sequence belongs to the UreD family. In terms of assembly, ureD, UreF and UreG form a complex that acts as a GTP-hydrolysis-dependent molecular chaperone, activating the urease apoprotein by helping to assemble the nickel containing metallocenter of UreC. The UreE protein probably delivers the nickel.

Its subcellular location is the cytoplasm. Its function is as follows. Required for maturation of urease via the functional incorporation of the urease nickel metallocenter. The polypeptide is Urease accessory protein UreD (Frankia alni (strain DSM 45986 / CECT 9034 / ACN14a)).